Consider the following 333-residue polypeptide: Ketol-acid reductoisomerase (NADP(+)) (333 aa).

The KARI N-terminal Rossmann domain occupies 1 to 171 (MSNDTQPKIA…GGARANIIKT (171 aa)). Residues 14 to 17 (YGSQ), R37, T42, and 72 to 75 (DMVQ) contribute to the NADP(+) site. The active site involves H97. G123 is a binding site for NADP(+). Residues 172 to 317 (TFKEETETDL…KKLRAKMVWL (146 aa)) form the KARI C-terminal knotted domain. Positions 180, 184, 216, and 220 each coordinate Mg(2+). Residue S241 participates in substrate binding.

The protein belongs to the ketol-acid reductoisomerase family. Mg(2+) is required as a cofactor.

The catalysed reaction is (2R)-2,3-dihydroxy-3-methylbutanoate + NADP(+) = (2S)-2-acetolactate + NADPH + H(+). The enzyme catalyses (2R,3R)-2,3-dihydroxy-3-methylpentanoate + NADP(+) = (S)-2-ethyl-2-hydroxy-3-oxobutanoate + NADPH + H(+). Its pathway is amino-acid biosynthesis; L-isoleucine biosynthesis; L-isoleucine from 2-oxobutanoate: step 2/4. The protein operates within amino-acid biosynthesis; L-valine biosynthesis; L-valine from pyruvate: step 2/4. In terms of biological role, involved in the biosynthesis of branched-chain amino acids (BCAA). Catalyzes an alkyl-migration followed by a ketol-acid reduction of (S)-2-acetolactate (S2AL) to yield (R)-2,3-dihydroxy-isovalerate. In the isomerase reaction, S2AL is rearranged via a Mg-dependent methyl migration to produce 3-hydroxy-3-methyl-2-ketobutyrate (HMKB). In the reductase reaction, this 2-ketoacid undergoes a metal-dependent reduction by NADPH to yield (R)-2,3-dihydroxy-isovalerate. This Xanthomonas oryzae pv. oryzae (strain MAFF 311018) protein is Ketol-acid reductoisomerase (NADP(+)).